The following is a 383-amino-acid chain: 1-deoxy-D-xylulose 5-phosphate reductoisomerase (383 aa).

6 residues coordinate NADPH: Thr10, Gly11, Ser12, Ile13, Asn38, and Asn121. Lys122 is a 1-deoxy-D-xylulose 5-phosphate binding site. An NADPH-binding site is contributed by Glu123. Asp147 lines the Mn(2+) pocket. Residues Ser148, Glu149, Ser172, and His195 each contribute to the 1-deoxy-D-xylulose 5-phosphate site. Mn(2+) is bound at residue Glu149. NADPH is bound at residue Gly201. 1-deoxy-D-xylulose 5-phosphate is bound by residues Ser208, Asn213, Lys214, and Glu217. Residue Glu217 coordinates Mn(2+).

Belongs to the DXR family. Mg(2+) serves as cofactor. Mn(2+) is required as a cofactor.

The enzyme catalyses 2-C-methyl-D-erythritol 4-phosphate + NADP(+) = 1-deoxy-D-xylulose 5-phosphate + NADPH + H(+). It functions in the pathway isoprenoid biosynthesis; isopentenyl diphosphate biosynthesis via DXP pathway; isopentenyl diphosphate from 1-deoxy-D-xylulose 5-phosphate: step 1/6. In terms of biological role, catalyzes the NADPH-dependent rearrangement and reduction of 1-deoxy-D-xylulose-5-phosphate (DXP) to 2-C-methyl-D-erythritol 4-phosphate (MEP). The chain is 1-deoxy-D-xylulose 5-phosphate reductoisomerase from Vesicomyosocius okutanii subsp. Calyptogena okutanii (strain HA).